The sequence spans 288 residues: Serine/threonine-protein phosphatase PGAM5, mitochondrial (288 aa).

The Mitochondrial matrix segment spans residues 1-6; the sequence is MAFRQA. The helical transmembrane segment at 7–29 threads the bilayer; sequence LQLAACGLAGGSAAVLFSAVAVG. The Mitochondrial intermembrane segment spans residues 30–288; the sequence is KPRAGGDADT…FMPPDKITRS (259 aa). The segment at 76–81 is interaction with KEAP1; the sequence is NVEFGE. Ser-86 carries the phosphoserine modification. Lys-115, Lys-143, and Lys-190 each carry N6-acetyllysine.

Belongs to the phosphoglycerate mutase family. BPG-dependent PGAM subfamily. As to quaternary structure, dimer. Forms a ternary complex with NFE2L2 and KEAP1. Interacts with BCL2L1 and MAP3K5. Upon TNF-induced necrosis, forms in complex with RIPK1, RIPK3 and MLKL; the formation of this complex leads to PGAM5 phosphorylation. Isoform 2, but not isoform 1, interacts with DNM1L; this interaction leads to DNM1L dephosphorylation and activation and eventually to mitochondria fragmentation. Post-translationally, phosphorylated by the RIPK1/RIPK3 complex under necrotic conditions. This phosphorylation increases PGAM5 phosphatase activity. Proteolytically cleaved by PARL in response to loss of mitochondrial membrane potential.

It localises to the mitochondrion outer membrane. Its subcellular location is the mitochondrion inner membrane. It carries out the reaction O-phospho-L-seryl-[protein] + H2O = L-seryl-[protein] + phosphate. It catalyses the reaction O-phospho-L-threonyl-[protein] + H2O = L-threonyl-[protein] + phosphate. Mitochondrial serine/threonine phosphatase that dephosphorylates various substrates and thus plays a role in different biological processes including cellular senescence or mitophagy. Modulates cellular senescence by regulating mitochondrial dynamics. Mechanistically, participates in mitochondrial fission through dephosphorylating DNM1L/DRP1. Additionally, dephosphorylates MFN2 in a stress-sensitive manner and consequently protects it from ubiquitination and degradation to promote mitochondrial network formation. Regulates mitophagy independent of PARKIN by interacting with and dephosphorylating FUNDC1, which interacts with LC3. Regulates anti-oxidative response by forming a tertiary complex with KEAP1 and NRF2. Regulates necroptosis by acting as a RIPK3 target and recruiting the RIPK1-RIPK3-MLKL necrosis 'attack' complex to mitochondria. In Rattus norvegicus (Rat), this protein is Serine/threonine-protein phosphatase PGAM5, mitochondrial (Pgam5).